A 293-amino-acid polypeptide reads, in one-letter code: uncharacterized protein (293 aa).

Positions 1–10 (MHMQLRKRKR) are enriched in basic residues. The interval 1-28 (MHMQLRKRKRVDYSGRNQTSDPPSTTTA) is disordered. Residues 15 to 28 (GRNQTSDPPSTTTA) show a composition bias toward polar residues.

Its subcellular location is the nucleus. This is an uncharacterized protein from Saccharomyces cerevisiae (strain ATCC 204508 / S288c) (Baker's yeast).